We begin with the raw amino-acid sequence, 393 residues long: MSLSIGMVAGEPSGDLLASRVIAGLRRDETVQCQGIGGPAMQAAGFDAWHPMHALTVFGYVDALKRLPSLLRTYGDVKRRWLASPPSVFVGVDAPDFNLKLELALRQAGTPTVHFVGPSIWAWRYERIHKIREAVSHMLVLFPFEEELYRKEGIPVTYVGHPLADAIPMQPDRAAARQRLGLDADARVLAILPGSRSSEIRILAPRFLQAAQQLQRRDPGLVCVVPMVNAQRRAEFEAILAQYPVPGLRCLTAEDAASGGLPVAWSALEASNAVLVASGTATLEAALFKRPMVISYYLSPWMRRIMAWKSGQQRPYLPWVGLPNVLLRDFAVPELLQDDATPDKLAEATWAALTDDAQAARVEARFAAMHRDLTRDTATLAARAILEVAHGAA.

It belongs to the LpxB family.

It catalyses the reaction a lipid X + a UDP-2-N,3-O-bis[(3R)-3-hydroxyacyl]-alpha-D-glucosamine = a lipid A disaccharide + UDP + H(+). It functions in the pathway bacterial outer membrane biogenesis; LPS lipid A biosynthesis. Its function is as follows. Condensation of UDP-2,3-diacylglucosamine and 2,3-diacylglucosamine-1-phosphate to form lipid A disaccharide, a precursor of lipid A, a phosphorylated glycolipid that anchors the lipopolysaccharide to the outer membrane of the cell. The protein is Lipid-A-disaccharide synthase of Bordetella petrii (strain ATCC BAA-461 / DSM 12804 / CCUG 43448).